Here is a 325-residue protein sequence, read N- to C-terminus: HTH-type transcriptional regulator VqsM (325 aa).

The region spanning 226 to 323 (QRIELFLDSI…GQSTTEFRNS (98 aa)) is the HTH araC/xylS-type domain. 2 consecutive DNA-binding regions (H-T-H motif) follow at residues 243-264 (VTTA…ADEG) and 290-313 (VDRI…RRWT).

Its function is as follows. Transcriptional regulator involved in both the repression (at least 99 genes, such as mexR and algU) and in the activation (at least 203 genes, such as mvfR, rsaL, vqsR and rpoS) of regulatory or putative regulatory proteins which are implicated in quorum sensing, virulence and multidrug resistance. The protein is HTH-type transcriptional regulator VqsM (vqsM) of Pseudomonas aeruginosa (strain ATCC 15692 / DSM 22644 / CIP 104116 / JCM 14847 / LMG 12228 / 1C / PRS 101 / PAO1).